A 238-amino-acid polypeptide reads, in one-letter code: Ribosomal RNA small subunit methyltransferase G (238 aa).

S-adenosyl-L-methionine contacts are provided by residues G77, F82, 128 to 129, and R147; that span reads AE.

It belongs to the methyltransferase superfamily. RNA methyltransferase RsmG family.

It localises to the cytoplasm. Specifically methylates the N7 position of guanine in position 535 of 16S rRNA. The polypeptide is Ribosomal RNA small subunit methyltransferase G (Geobacillus sp. (strain WCH70)).